A 928-amino-acid polypeptide reads, in one-letter code: Isoleucine--tRNA ligase (928 aa).

Residues 57-67 carry the 'HIGH' region motif; it reads PFANGNIHMGH. Glutamate 552 contributes to the L-isoleucyl-5'-AMP binding site. The 'KMSKS' region motif lies at 593–597; that stretch reads KMSKS. Lysine 596 is an ATP binding site. Cysteine 887, cysteine 890, cysteine 907, and cysteine 910 together coordinate Zn(2+).

It belongs to the class-I aminoacyl-tRNA synthetase family. IleS type 1 subfamily. In terms of assembly, monomer. The cofactor is Zn(2+).

The protein resides in the cytoplasm. The catalysed reaction is tRNA(Ile) + L-isoleucine + ATP = L-isoleucyl-tRNA(Ile) + AMP + diphosphate. Functionally, catalyzes the attachment of isoleucine to tRNA(Ile). As IleRS can inadvertently accommodate and process structurally similar amino acids such as valine, to avoid such errors it has two additional distinct tRNA(Ile)-dependent editing activities. One activity is designated as 'pretransfer' editing and involves the hydrolysis of activated Val-AMP. The other activity is designated 'posttransfer' editing and involves deacylation of mischarged Val-tRNA(Ile). The sequence is that of Isoleucine--tRNA ligase from Latilactobacillus sakei subsp. sakei (strain 23K) (Lactobacillus sakei subsp. sakei).